Reading from the N-terminus, the 328-residue chain is Hairy/enhancer-of-split related with YRPW motif-like protein (328 aa).

The segment at 1-54 (MKRPREPSGSDSESDGPIDVGREGELSQMARPLSTPSPSQMQARKKRRGIIEKR) is disordered. The segment at 42 to 111 (QARKKRRGII…GGTGFFDARA (70 aa)) is transcriptional repression and interaction with NCOR1 and SIN3A. Positions 43–98 (ARKKRRGIIEKRRRDRINSSLSELRRLVPTAFEKQGSSKLEKAEVLQMTVDHLKML) constitute a bHLH domain. Positions 116–153 (FRSIGFRECLTEVIRYLGVLEGPSSRADPVRIRLLSHL) constitute an Orange domain. The segment at 236-272 (LLPSRGASSTRRARPLERPAAPLPAAPSGRATRGSHM) is disordered.

Belongs to the HEY family. As to quaternary structure, self-associates. Interacts with GATA4, GATA6, HES1, HEY1 and HEY2. Interacts with HDAC1, NCOR1 and SIN3A.

The protein resides in the nucleus. Functionally, downstream effector of Notch signaling which may be required for cardiovascular development. Transcriptional repressor which binds preferentially to the canonical E box sequence 5'-CACGTG-3'. Represses transcription by the cardiac transcriptional activators GATA4 and GATA6. The sequence is that of Hairy/enhancer-of-split related with YRPW motif-like protein (HEYL) from Bos taurus (Bovine).